The sequence spans 88 residues: Small ribosomal subunit protein uS17 (88 aa).

The protein belongs to the universal ribosomal protein uS17 family. As to quaternary structure, part of the 30S ribosomal subunit.

Functionally, one of the primary rRNA binding proteins, it binds specifically to the 5'-end of 16S ribosomal RNA. In Ectopseudomonas mendocina (strain ymp) (Pseudomonas mendocina), this protein is Small ribosomal subunit protein uS17.